The primary structure comprises 130 residues: Small ribosomal subunit protein uS8 (130 aa).

The protein belongs to the universal ribosomal protein uS8 family. As to quaternary structure, part of the 30S ribosomal subunit.

In terms of biological role, one of the primary rRNA binding proteins, it binds directly to 16S rRNA central domain where it helps coordinate assembly of the platform of the 30S subunit. The protein is Small ribosomal subunit protein uS8 of Methanococcus voltae.